Reading from the N-terminus, the 861-residue chain is Bifunctional uridylyltransferase/uridylyl-removing enzyme (861 aa).

Positions 1-322 (MHTAAAATPA…FPTELGITRT (322 aa)) are uridylyltransferase. Residues 323–679 (INGRFVERQG…ARISPVGEGL (357 aa)) form a uridylyl-removing region. An HD domain is found at 441 to 557 (VDQHILMVVR…RHFADQVGSE (117 aa)). 2 consecutive ACT domains span residues 680-763 (QVAV…AEPP) and 792-861 (LLSL…ALAI).

The protein belongs to the GlnD family. Mg(2+) serves as cofactor.

It catalyses the reaction [protein-PII]-L-tyrosine + UTP = [protein-PII]-uridylyl-L-tyrosine + diphosphate. The catalysed reaction is [protein-PII]-uridylyl-L-tyrosine + H2O = [protein-PII]-L-tyrosine + UMP + H(+). With respect to regulation, uridylyltransferase (UTase) activity is inhibited by glutamine, while glutamine activates uridylyl-removing (UR) activity. Functionally, modifies, by uridylylation and deuridylylation, the PII regulatory proteins (GlnB and homologs), in response to the nitrogen status of the cell that GlnD senses through the glutamine level. Under low glutamine levels, catalyzes the conversion of the PII proteins and UTP to PII-UMP and PPi, while under higher glutamine levels, GlnD hydrolyzes PII-UMP to PII and UMP (deuridylylation). Thus, controls uridylylation state and activity of the PII proteins, and plays an important role in the regulation of nitrogen assimilation and metabolism. The chain is Bifunctional uridylyltransferase/uridylyl-removing enzyme from Ralstonia nicotianae (strain ATCC BAA-1114 / GMI1000) (Ralstonia solanacearum).